The sequence spans 334 residues: Glycosylinositol phosphorylceramide mannosyl transferase 1 (334 aa).

Residues 1 to 26 (MGGGEVSKEMGACSLAYRRGDQKLRK) are Cytoplasmic-facing. The chain crosses the membrane as a helical; Signal-anchor for type II membrane protein span at residues 27–49 (FVTARSTKFLLFCCIAFVLVTIV). Residues 50-334 (CRSSRPWVNS…AVDSRNLWFW (285 aa)) are Lumenal-facing. N-linked (GlcNAc...) asparagine glycosylation is present at asparagine 58. Substrate-binding positions include 145–150 (DSLNNR), 166–168 (DDD), arginine 196, and 258–262 (RNCED). A Mn(2+)-binding site is contributed by aspartate 168. The cysteines at positions 260 and 305 are disulfide-linked. Aspartate 262 is an active-site residue. N-linked (GlcNAc...) asparagine glycosylation is present at asparagine 271. Substrate-binding positions include 289–302 (STGISSIGGHTEKR) and 292–302 (ISSIGGHTEKR).

The protein belongs to the glycosyltransferase 64 family. It depends on Mn(2+) as a cofactor. Expressed in leaves, roots, stem, and flowers.

It is found in the golgi apparatus membrane. The protein operates within protein modification; protein glycosylation. Its pathway is sphingolipid metabolism. In terms of biological role, mannosyl transferase (ManT) required for the biosynthesis of mannose-carrying glycosylinositol phosphorylceramides (GIPCs). Maybe involved in cell-cell adhesion that maintains the integrity of organs by providing mechanical strength and facilitating the movement of metabolites throughout the plant during development. Prevents abscisic acid- (ABA-) mediated effects on development (e.g. cell size, flowering time, senescence). Probably implicated in beta-(1,4)-galactan biosynthesis thus being a cell-wall synthesis-related (CWSR) protein. The sequence is that of Glycosylinositol phosphorylceramide mannosyl transferase 1 from Arabidopsis thaliana (Mouse-ear cress).